A 249-amino-acid polypeptide reads, in one-letter code: ATP synthase subunit a (249 aa).

The next 6 membrane-spanning stretches (helical) occupy residues 30–50 (SAYM…GVAG), 84–104 (FFPL…VGII), 114–134 (LIVT…YGFY), 143–163 (IFVP…IEVF), 196–216 (LLAG…GMVI), and 221–241 (LELL…CIYL).

This sequence belongs to the ATPase A chain family. F-type ATPases have 2 components, CF(1) - the catalytic core - and CF(0) - the membrane proton channel. CF(1) has five subunits: alpha(3), beta(3), gamma(1), delta(1), epsilon(1). CF(0) has four main subunits: a, b, b' and c.

It is found in the cell inner membrane. Functionally, key component of the proton channel; it plays a direct role in the translocation of protons across the membrane. This is ATP synthase subunit a from Rhodopseudomonas palustris (strain BisB18).